A 352-amino-acid chain; its full sequence is Phenylalanine--tRNA ligase alpha subunit (352 aa).

E258 serves as a coordination point for Mg(2+).

It belongs to the class-II aminoacyl-tRNA synthetase family. Phe-tRNA synthetase alpha subunit type 1 subfamily. As to quaternary structure, tetramer of two alpha and two beta subunits. Mg(2+) serves as cofactor.

It localises to the cytoplasm. The enzyme catalyses tRNA(Phe) + L-phenylalanine + ATP = L-phenylalanyl-tRNA(Phe) + AMP + diphosphate + H(+). The chain is Phenylalanine--tRNA ligase alpha subunit from Staphylococcus aureus (strain bovine RF122 / ET3-1).